The chain runs to 424 residues: Spore coat protein SP60 (424 aa).

An N-terminal signal peptide occupies residues 1-23 (MKILSLLVVGALCMGGKVYGEVN). Follistatin-like domains lie at 52 to 74 (DCST…RQCV), 85 to 109 (KCDN…ALCV), 117 to 139 (VCRT…ECCV), 184 to 206 (ICRL…ECCV), 215 to 234 (DLKC…SKCC), and 299 to 322 (RCDD…LSCE). The tract at residues 330–424 (RSLDWAENEN…FQDANDEWDY (95 aa)) is disordered. 2 stretches are compositionally biased toward acidic residues: residues 335–357 (AENE…YDGD) and 365–424 (YDGD…EWDY).

The polypeptide is Spore coat protein SP60 (cotC) (Dictyostelium discoideum (Social amoeba)).